The primary structure comprises 1027 residues: MGVSLLASSSAFVTKPLLTQLVHLSPISLNFTVRRFKPFTCLSRYYTTNPYNMTSNFKTFNLDFLKPDLDERSYRFIELPNKLKALLIQDPKADKAAASLDVNIGAFEDPKNLPGLAHFCEHLLFMGSEKFPDENEYSSYLSKHGGSSNAYTASQNTNYFFEVNHQHLFGALDRFSGFFSCPLFNKDSTDKEINAVNSENKKNLQNDIWRIYQLDKSLTNTKHPYHKFSTGNIETLGTLPKENGLNVRDELLKFHKNFYSANLMKLCILGREDLDTLSDWTYDLFKDVANNGREVPLYAEPIMQPEHLQKIIQVRPVKDLKKLEISFTVPDMEEHWESKPPRILSHLIGHEGSGSLLAHLKKLGWANELSAGGHTVSKGNAFFAVDIDLTDNGLTHYRDVIVLIFQYIEMLKNSLPQKWIFNELQDISNATFKFKQAGSPSSTVSSLAKCLEKDYIPVSRILAMGLLTKYEPDLLTQYTDALVPENSRVTLISRSLETDSAEKWYGTAYKVVDYPADLIKNMKSPGLNPALTLPRPNEFVSTNFKVDKIDGIKPLDEPVLLLSDDVSKLWYKKDDRFWQPRGYIYLSFKLPHTHASIINSMLSTLYTQLANDALKDVQYDAACADLRISFNKTNQGLAITASGFNEKLIILLTRFLQGVNSFEPKKDRFEILKDKTIRHLKNLLYEVPYSQMSNYYNAIINERSWSTAEKLQVFEKLTFEQLINFIPTIYEGVYFETLIHGNIKHEEALEVDSLIKSLIPNNIHNLQVSNNRLRSYLLPKGKTFRYETALKDSQNVNSCIQHVTQLDVYSEDLSALSGLFAQLIHEPCFDTLRTKEQLGYVVFSSSLNNHGTANIRILIQSEHTTPYLEWRINNFYETFGQVLRDMPEEDFEKHKEALCNSLLQKFKNMAEESARYTAAIYLGDYNFTHRQKKAKLVANITKQQMIDFYENYIMSENASKLILHLKSQVENKELNENELDTAKYPTGQLIEDVGAFKSTLFVAPVRQPMKDFEISAPPKLNNSSESE.

Histidine 118 is a binding site for Zn(2+). Glutamate 121 (proton acceptor) is an active-site residue. Residues histidine 122 and glutamate 199 each contribute to the Zn(2+) site.

This sequence belongs to the peptidase M16 family. Zn(2+) is required as a cofactor.

It is found in the membrane. Its activity is regulated as follows. Inhibited by chelating agents like EDTA, TPEN and 1,1-phenanthroline, as well as NEM, free cysteine and DTT. In terms of biological role, involved in the N-terminal endoproteolytic cleavage of the P2 precursor of the a-factor mating pheromone. Capable of proteolysing the established mammalian insulin-degrading enzymes (IDEs) substrates amyloid-beta peptide and insulin B-chain. The sequence is that of A-factor-processing enzyme (STE23) from Saccharomyces cerevisiae (strain ATCC 204508 / S288c) (Baker's yeast).